We begin with the raw amino-acid sequence, 116 residues long: Ribosome-binding factor A (116 aa).

The protein belongs to the RbfA family. Monomer. Binds 30S ribosomal subunits, but not 50S ribosomal subunits or 70S ribosomes.

It localises to the cytoplasm. Its function is as follows. One of several proteins that assist in the late maturation steps of the functional core of the 30S ribosomal subunit. Associates with free 30S ribosomal subunits (but not with 30S subunits that are part of 70S ribosomes or polysomes). Required for efficient processing of 16S rRNA. May interact with the 5'-terminal helix region of 16S rRNA. This chain is Ribosome-binding factor A, found in Streptococcus pneumoniae (strain Hungary19A-6).